The primary structure comprises 714 residues: Fatty acid oxidation complex subunit alpha (714 aa).

The interval 1–190 is enoyl-CoA hydratase; that stretch reads MDMTSAFTLN…KSGLVDEIVP (190 aa). Residues 306–714 form a 3-hydroxyacyl-CoA dehydrogenase region; it reads GTLDSIGILG…FWKTSATDRH (409 aa).

In the N-terminal section; belongs to the enoyl-CoA hydratase/isomerase family. This sequence in the central section; belongs to the 3-hydroxyacyl-CoA dehydrogenase family. Heterotetramer of two alpha chains (FadJ) and two beta chains (FadI).

It localises to the cytoplasm. The enzyme catalyses a (3S)-3-hydroxyacyl-CoA = a (2E)-enoyl-CoA + H2O. It catalyses the reaction a 4-saturated-(3S)-3-hydroxyacyl-CoA = a (3E)-enoyl-CoA + H2O. The catalysed reaction is a (3S)-3-hydroxyacyl-CoA + NAD(+) = a 3-oxoacyl-CoA + NADH + H(+). It carries out the reaction (3S)-3-hydroxybutanoyl-CoA = (3R)-3-hydroxybutanoyl-CoA. The protein operates within lipid metabolism; fatty acid beta-oxidation. Its function is as follows. Catalyzes the formation of a hydroxyacyl-CoA by addition of water on enoyl-CoA. Also exhibits 3-hydroxyacyl-CoA epimerase and 3-hydroxyacyl-CoA dehydrogenase activities. The protein is Fatty acid oxidation complex subunit alpha of Escherichia fergusonii (strain ATCC 35469 / DSM 13698 / CCUG 18766 / IAM 14443 / JCM 21226 / LMG 7866 / NBRC 102419 / NCTC 12128 / CDC 0568-73).